Here is a 37-residue protein sequence, read N- to C-terminus: Large ribosomal subunit protein bL36A (37 aa).

This sequence belongs to the bacterial ribosomal protein bL36 family.

This chain is Large ribosomal subunit protein bL36A, found in Haemophilus ducreyi (strain 35000HP / ATCC 700724).